Reading from the N-terminus, the 296-residue chain is Prostate androgen-regulated mucin-like protein 1 homolog (296 aa).

Positions 1–20 (MVCKALITLCIFAAGLRVQG) are cleaved as a signal peptide. The Extracellular segment spans residues 21–244 (SPTPTLLPVS…EVENALSSGS (224 aa)). N-linked (GlcNAc...) asparagine glycans are attached at residues Asn-62, Asn-96, and Asn-108. The segment at 73–220 (LTSQLPTHPR…SPQDTEPGKV (148 aa)) is disordered. Residues 80–96 (HPREEAVTSPPLKREVN) show a composition bias toward basic and acidic residues. Low complexity predominate over residues 97-111 (STDSSPTGFSSNSSG). Residues 125 to 145 (SPETSVPATGSQSPTLLFSQG) show a composition bias toward polar residues. Composition is skewed to low complexity over residues 146–175 (PTSA…TVNN) and 195–205 (SHTPTSHVTEP). The N-linked (GlcNAc...) asparagine glycan is linked to Asn-168. The segment covering 206 to 217 (VPKEKSPQDTEP) has biased composition (basic and acidic residues). A helical membrane pass occupies residues 245–265 (IAAITVTVIAVVLLVFGAAAY). Residues 266–296 (LKIRHSSYGRLLDDHDYGSWGNYNNPLYDDS) lie on the Cytoplasmic side of the membrane. Ser-284 bears the Phosphoserine mark.

It belongs to the PARM family. In terms of processing, highly N-glycosylated and O-glycosylated. Expressed in prostate. Detected in other organs at low levels, these include the heart and various tissues of the urogenital tract. Not detected in mammary gland.

The protein resides in the cell membrane. The protein localises to the golgi apparatus membrane. It is found in the endosome membrane. May regulate TLP1 expression and telomerase activity, thus enabling certain prostatic cells to resist apoptosis. This chain is Prostate androgen-regulated mucin-like protein 1 homolog (Parm1), found in Rattus norvegicus (Rat).